Consider the following 218-residue polypeptide: Thiamine-phosphate synthase (218 aa).

4-amino-2-methyl-5-(diphosphooxymethyl)pyrimidine contacts are provided by residues 43–47 (QFRDK) and Asn-78. Positions 79 and 98 each coordinate Mg(2+). Ser-117 contacts 4-amino-2-methyl-5-(diphosphooxymethyl)pyrimidine. 143-145 (TNS) is a 2-[(2R,5Z)-2-carboxy-4-methylthiazol-5(2H)-ylidene]ethyl phosphate binding site. 4-amino-2-methyl-5-(diphosphooxymethyl)pyrimidine is bound at residue Lys-146. Residues Gly-174 and 194 to 195 (IS) contribute to the 2-[(2R,5Z)-2-carboxy-4-methylthiazol-5(2H)-ylidene]ethyl phosphate site.

The protein belongs to the thiamine-phosphate synthase family. Mg(2+) is required as a cofactor.

The enzyme catalyses 2-[(2R,5Z)-2-carboxy-4-methylthiazol-5(2H)-ylidene]ethyl phosphate + 4-amino-2-methyl-5-(diphosphooxymethyl)pyrimidine + 2 H(+) = thiamine phosphate + CO2 + diphosphate. It carries out the reaction 2-(2-carboxy-4-methylthiazol-5-yl)ethyl phosphate + 4-amino-2-methyl-5-(diphosphooxymethyl)pyrimidine + 2 H(+) = thiamine phosphate + CO2 + diphosphate. The catalysed reaction is 4-methyl-5-(2-phosphooxyethyl)-thiazole + 4-amino-2-methyl-5-(diphosphooxymethyl)pyrimidine + H(+) = thiamine phosphate + diphosphate. It functions in the pathway cofactor biosynthesis; thiamine diphosphate biosynthesis; thiamine phosphate from 4-amino-2-methyl-5-diphosphomethylpyrimidine and 4-methyl-5-(2-phosphoethyl)-thiazole: step 1/1. Condenses 4-methyl-5-(beta-hydroxyethyl)thiazole monophosphate (THZ-P) and 2-methyl-4-amino-5-hydroxymethyl pyrimidine pyrophosphate (HMP-PP) to form thiamine monophosphate (TMP). The chain is Thiamine-phosphate synthase from Lactococcus lactis subsp. cremoris (strain SK11).